We begin with the raw amino-acid sequence, 541 residues long: Cytochrome P450 67 (541 aa).

A heme-binding site is contributed by C479.

The protein belongs to the cytochrome P450 family. It depends on heme as a cofactor.

The chain is Cytochrome P450 67 (CYP67) from Uromyces fabae (Rust fungus).